The primary structure comprises 466 residues: Glutamyl-tRNA reductase (466 aa).

Substrate contacts are provided by residues Thr-47 to Arg-50, Ser-107, Glu-112 to Gln-114, and Gln-118. Residue Cys-48 is the Nucleophile of the active site. Gly-194–Ser-199 is an NADP(+) binding site.

It belongs to the glutamyl-tRNA reductase family. In terms of assembly, homodimer.

It catalyses the reaction (S)-4-amino-5-oxopentanoate + tRNA(Glu) + NADP(+) = L-glutamyl-tRNA(Glu) + NADPH + H(+). The protein operates within porphyrin-containing compound metabolism; protoporphyrin-IX biosynthesis; 5-aminolevulinate from L-glutamyl-tRNA(Glu): step 1/2. In terms of biological role, catalyzes the NADPH-dependent reduction of glutamyl-tRNA(Glu) to glutamate 1-semialdehyde (GSA). The chain is Glutamyl-tRNA reductase from Corynebacterium efficiens (strain DSM 44549 / YS-314 / AJ 12310 / JCM 11189 / NBRC 100395).